Reading from the N-terminus, the 344-residue chain is Phosphate acyltransferase (344 aa).

Belongs to the PlsX family. Homodimer. Probably interacts with PlsY.

It localises to the cytoplasm. It catalyses the reaction a fatty acyl-[ACP] + phosphate = an acyl phosphate + holo-[ACP]. Its pathway is lipid metabolism; phospholipid metabolism. Functionally, catalyzes the reversible formation of acyl-phosphate (acyl-PO(4)) from acyl-[acyl-carrier-protein] (acyl-ACP). This enzyme utilizes acyl-ACP as fatty acyl donor, but not acyl-CoA. This is Phosphate acyltransferase from Erwinia tasmaniensis (strain DSM 17950 / CFBP 7177 / CIP 109463 / NCPPB 4357 / Et1/99).